A 455-amino-acid chain; its full sequence is Argininosuccinate lyase (455 aa).

It belongs to the lyase 1 family. Argininosuccinate lyase subfamily.

It is found in the cytoplasm. The enzyme catalyses 2-(N(omega)-L-arginino)succinate = fumarate + L-arginine. It participates in amino-acid biosynthesis; L-arginine biosynthesis; L-arginine from L-ornithine and carbamoyl phosphate: step 3/3. This Shewanella sp. (strain ANA-3) protein is Argininosuccinate lyase.